Here is a 488-residue protein sequence, read N- to C-terminus: MVIKNIDAATVAKKFLVRGYNIDPKAAELICKSGLFSDELVDKICRIANGGFIIEKSVVEEFLRNLSNLKPATLTPRPEERKVEEVKASCIALKVIKDITGKSSCQGNVEDFLMYFNSRLEKLSRIIRSRVNTTPIAHAGKVRGNVSVVGMVNEVYERGDKCYIRLEDTTGTITCVATGKNAEVARELLGDEVIGVTGLLKGSSLYANRIVFPDVPINGNGEKKRDFYIVFLSDTHFGSKEFLEKEWEMFVRWLKGEVGGKKSQNLAEKVKYIVIAGDIVDGIGVYPGQEDDLAISDIYGQYEFAASHLDEIPKEIKIIVSPGNHDAVRQAEPQPAFEGEIRSLFPKNVEHVGNPAYVDIEGVKVLIYHGRSIDDIISKIPRLSYDEPQKVMEELLKRRHLSPIYGGRTPLAPEREDYLVIEDVPDILHCGHIHTYGTGFYRGVFMVNSSTWQAQTEFQKKVNLNPMPGNVAVYRPGGEVIRLRFYGE.

The protein belongs to the DNA polymerase delta/II small subunit family. In terms of assembly, heterodimer of a large subunit and a small subunit.

It catalyses the reaction DNA(n) + a 2'-deoxyribonucleoside 5'-triphosphate = DNA(n+1) + diphosphate. It carries out the reaction Exonucleolytic cleavage in the 3'- to 5'-direction to yield nucleoside 5'-phosphates.. In terms of biological role, possesses two activities: a DNA synthesis (polymerase) and an exonucleolytic activity that degrades single-stranded DNA in the 3' to 5' direction. Has a template-primer preference which is characteristic of a replicative DNA polymerase. The protein is DNA polymerase II small subunit (polB) of Archaeoglobus fulgidus (strain ATCC 49558 / DSM 4304 / JCM 9628 / NBRC 100126 / VC-16).